A 147-amino-acid chain; its full sequence is D-aminoacyl-tRNA deacylase (147 aa).

The short motif at 137-138 is the Gly-cisPro motif, important for rejection of L-amino acids element; it reads GP.

The protein belongs to the DTD family. Homodimer.

The protein localises to the cytoplasm. The catalysed reaction is glycyl-tRNA(Ala) + H2O = tRNA(Ala) + glycine + H(+). The enzyme catalyses a D-aminoacyl-tRNA + H2O = a tRNA + a D-alpha-amino acid + H(+). Its function is as follows. An aminoacyl-tRNA editing enzyme that deacylates mischarged D-aminoacyl-tRNAs. Also deacylates mischarged glycyl-tRNA(Ala), protecting cells against glycine mischarging by AlaRS. Acts via tRNA-based rather than protein-based catalysis; rejects L-amino acids rather than detecting D-amino acids in the active site. By recycling D-aminoacyl-tRNA to D-amino acids and free tRNA molecules, this enzyme counteracts the toxicity associated with the formation of D-aminoacyl-tRNA entities in vivo and helps enforce protein L-homochirality. The chain is D-aminoacyl-tRNA deacylase from Acinetobacter baumannii (strain AYE).